The primary structure comprises 87 residues: U3-theraphotoxin-Hhn1b (87 aa).

A signal peptide spans 1–24 (MVNMKASMFLTFAGLVLLFVVCYA). Positions 25 to 52 (SESEEKEFPREMLSSIFAVDNDFKQEER) are excised as a propeptide. 2 disulfide bridges follow: cysteine 54–cysteine 67 and cysteine 61–cysteine 72.

Belongs to the neurotoxin 10 (Hwtx-1) family. 51 (Hntx-8) subfamily. Hntx-8 sub-subfamily. Expressed by the venom gland.

The protein resides in the secreted. Ion channel inhibitor. In Cyriopagopus hainanus (Chinese bird spider), this protein is U3-theraphotoxin-Hhn1b.